Here is a 287-residue protein sequence, read N- to C-terminus: ATP synthase gamma chain (287 aa).

Belongs to the ATPase gamma chain family. As to quaternary structure, F-type ATPases have 2 components, CF(1) - the catalytic core - and CF(0) - the membrane proton channel. CF(1) has five subunits: alpha(3), beta(3), gamma(1), delta(1), epsilon(1). CF(0) has three main subunits: a, b and c.

It localises to the cell inner membrane. In terms of biological role, produces ATP from ADP in the presence of a proton gradient across the membrane. The gamma chain is believed to be important in regulating ATPase activity and the flow of protons through the CF(0) complex. This Baumannia cicadellinicola subsp. Homalodisca coagulata protein is ATP synthase gamma chain.